The primary structure comprises 367 residues: 3-dehydroquinate synthase (367 aa).

NAD(+) contacts are provided by residues 72-77 (DGENYK), 106-110 (GVIGD), 130-131 (TT), lysine 143, lysine 152, and 170-173 (FLST). The Zn(2+) site is built by glutamate 185, histidine 248, and histidine 265.

It belongs to the sugar phosphate cyclases superfamily. Dehydroquinate synthase family. Requires Co(2+) as cofactor. The cofactor is Zn(2+). NAD(+) is required as a cofactor.

The protein resides in the cytoplasm. It catalyses the reaction 7-phospho-2-dehydro-3-deoxy-D-arabino-heptonate = 3-dehydroquinate + phosphate. The protein operates within metabolic intermediate biosynthesis; chorismate biosynthesis; chorismate from D-erythrose 4-phosphate and phosphoenolpyruvate: step 2/7. Functionally, catalyzes the conversion of 3-deoxy-D-arabino-heptulosonate 7-phosphate (DAHP) to dehydroquinate (DHQ). This chain is 3-dehydroquinate synthase, found in Buchnera aphidicola subsp. Cinara cedri (strain Cc).